We begin with the raw amino-acid sequence, 334 residues long: Holliday junction branch migration complex subunit RuvB (334 aa).

The segment at 1–182 (MDERLVSTEA…FGVHARLEYY (182 aa)) is large ATPase domain (RuvB-L). ATP is bound by residues L21, R22, G63, K66, T67, T68, 129–131 (EDF), R172, Y182, and R219. T67 is a Mg(2+) binding site. The segment at 183–253 (EQRDLAHIVS…IAEDALERLQ (71 aa)) is small ATPAse domain (RuvB-S). Positions 256–334 (KLGLDHIDHK…HFQMEVPIRD (79 aa)) are head domain (RuvB-H). R311 and R316 together coordinate DNA.

It belongs to the RuvB family. Homohexamer. Forms an RuvA(8)-RuvB(12)-Holliday junction (HJ) complex. HJ DNA is sandwiched between 2 RuvA tetramers; dsDNA enters through RuvA and exits via RuvB. An RuvB hexamer assembles on each DNA strand where it exits the tetramer. Each RuvB hexamer is contacted by two RuvA subunits (via domain III) on 2 adjacent RuvB subunits; this complex drives branch migration. In the full resolvosome a probable DNA-RuvA(4)-RuvB(12)-RuvC(2) complex forms which resolves the HJ.

It localises to the cytoplasm. It catalyses the reaction ATP + H2O = ADP + phosphate + H(+). In terms of biological role, the RuvA-RuvB-RuvC complex processes Holliday junction (HJ) DNA during genetic recombination and DNA repair, while the RuvA-RuvB complex plays an important role in the rescue of blocked DNA replication forks via replication fork reversal (RFR). RuvA specifically binds to HJ cruciform DNA, conferring on it an open structure. The RuvB hexamer acts as an ATP-dependent pump, pulling dsDNA into and through the RuvAB complex. RuvB forms 2 homohexamers on either side of HJ DNA bound by 1 or 2 RuvA tetramers; 4 subunits per hexamer contact DNA at a time. Coordinated motions by a converter formed by DNA-disengaged RuvB subunits stimulates ATP hydrolysis and nucleotide exchange. Immobilization of the converter enables RuvB to convert the ATP-contained energy into a lever motion, pulling 2 nucleotides of DNA out of the RuvA tetramer per ATP hydrolyzed, thus driving DNA branch migration. The RuvB motors rotate together with the DNA substrate, which together with the progressing nucleotide cycle form the mechanistic basis for DNA recombination by continuous HJ branch migration. Branch migration allows RuvC to scan DNA until it finds its consensus sequence, where it cleaves and resolves cruciform DNA. In Bacillus pumilus (strain SAFR-032), this protein is Holliday junction branch migration complex subunit RuvB.